A 107-amino-acid chain; its full sequence is Stellacyanin (107 aa).

Positions 1 to 105 (TVYTVGDSAG…GQKVHINVTV (105 aa)) constitute a Phytocyanin domain. Residue N28 is glycosylated (N-linked (GlcNAc...) asparagine). H46 contacts Cu cation. C59 and C93 are joined by a disulfide. N60 is a glycosylation site (N-linked (GlcNAc...) asparagine). Residues C87, H92, and Q97 each coordinate Cu cation. A glycan (N-linked (GlcNAc...) asparagine) is linked at N102.

The protein is Stellacyanin of Toxicodendron vernicifluum (Japanese lacquer tree).